We begin with the raw amino-acid sequence, 243 residues long: UPF0758 protein AM1_4368 (243 aa).

The MPN domain occupies 113-235 (VIDDPAVAAA…FTSLRQTTSL (123 aa)). Zn(2+) contacts are provided by H184, H186, and D197. The short motif at 184-197 (HNHPSGQTDPSPED) is the JAMM motif element.

It belongs to the UPF0758 family.

In Acaryochloris marina (strain MBIC 11017), this protein is UPF0758 protein AM1_4368.